Reading from the N-terminus, the 332-residue chain is 2,3-diketo-L-gulonate reductase (332 aa).

The active-site Proton donor is the His44. Residues 168–174, 224–225, and 304–306 contribute to the NAD(+) site; these read ITMVDMS, WK, and GHE.

Belongs to the LDH2/MDH2 oxidoreductase family. DlgD subfamily. In terms of assembly, homodimer.

The protein resides in the cytoplasm. It catalyses the reaction 3-dehydro-L-gulonate + NAD(+) = 2,3-dioxo-L-gulonate + NADH + H(+). The enzyme catalyses 3-dehydro-L-gulonate + NADP(+) = 2,3-dioxo-L-gulonate + NADPH + H(+). Catalyzes the reduction of 2,3-diketo-L-gulonate in the presence of NADH, to form 3-keto-L-gulonate. This is 2,3-diketo-L-gulonate reductase from Pasteurella multocida (strain Pm70).